A 131-amino-acid polypeptide reads, in one-letter code: Protein TIFY 5A (131 aa).

The EAR motif lies at 9 to 13; sequence LELRL. Disordered regions lie at residues 14–44 and 74–131; these read FPTS…EESQ and REMK…HSRR. Residues 16–34 are compositionally biased toward low complexity; that stretch reads TSYDSDSSDTTSVVESTSS. A Tify domain is found at 39–74; sequence PNEESQRITIFYNGKMCFSSDVTHLQARSIISIASR. Over residues 79-100 the composition is skewed to polar residues; it reads KSSSNGSDPPNKSTSFHHNQLP. A Jas motif is present at residues 105–127; that stretch reads SMKKSLQSFLQKRKIRIQATSPY. The Nuclear localization signal signature appears at 106–113; it reads MKKSLQSF. The span at 122 to 131 shows a compositional bias: polar residues; the sequence is QATSPYHSRR.

The protein belongs to the TIFY/JAZ family. As to quaternary structure, interacts with TPL and weakly with COI1, but not with AFPH2/NINJA. Interacts with MYC2, MYB21, MYB24, TIFY10A/JAZ1, TIFY10B/JAZ2, TIFY6B/JAZ3, TIFY6A/JAZ4, TIFY11A/JAZ5, TIFY11B/JAZ6, TIFY7/JAZ9, TIFY9/JAZ10 and TIFY3B/JAZ12. Interacts with RHD6 and RSL1. (Microbial infection) Interacts with the pathogenic Pseudomonas syringae HopZ1a protein. Post-translationally, (Microbial infection) Acetylated by Pseudomonas syringae HopZ1a. In terms of processing, ubiquitinated.

It is found in the nucleus. Functionally, repressor of jasmonate responses. Unable to associate strongly with COI1 in the presence of jasmonoyl-isoleucine (JA-Ile) and is therefore more resistant to JA-mediated-degradation than other TIFY/JAZ proteins. Repress gene expression through direct recruitment of the corepressor TOPLESS to cognate transcription factors. Interacts with and suppresses RHD6 and RSL1 transcription factor activities to negatively regulate jasmonate-stimulated root hair development. The polypeptide is Protein TIFY 5A (Arabidopsis thaliana (Mouse-ear cress)).